We begin with the raw amino-acid sequence, 245 residues long: Dehydrogenase/reductase SDR family member 6 (245 aa).

Residues 16–18 (QGI), D37, and D58 contribute to the NAD(+) site. R144 lines the substrate pocket. The active-site Proton acceptor is the Y147. NAD(+) is bound by residues K151 and 180-184 (VDTPS). R188 and R205 together coordinate substrate.

Belongs to the short-chain dehydrogenases/reductases (SDR) family. In terms of assembly, homotetramer.

The protein localises to the cytoplasm. The enzyme catalyses cis-4-hydroxy-L-proline + NAD(+) = 4-oxo-L-proline + NADH + H(+). It carries out the reaction (R)-3-hydroxybutanoate + NAD(+) = acetoacetate + NADH + H(+). The protein operates within amino-acid metabolism. It participates in siderophore biosynthesis. In terms of biological role, NAD(H)-dependent dehydrogenase/reductase with a preference for cyclic substrates. Catalyzes stereoselective conversion of 4-oxo-L-proline to cis-4-hydroxy-L-proline, likely a detoxification mechanism for ketoprolines. Mediates the formation of 2,5-dihydroxybenzoate (2,5-DHBA), a siderophore that chelates free cytoplasmic iron and associates with LCN2, thereby regulating iron transport and homeostasis while protecting cells against free radical-induced oxidative stress. The iron-siderophore complex is imported into mitochondria, providing an iron source for mitochondrial metabolic processes in particular heme synthesis. May act as a 3-hydroxybutyrate dehydrogenase. This Bos taurus (Bovine) protein is Dehydrogenase/reductase SDR family member 6 (BDH2).